A 113-amino-acid chain; its full sequence is Protein Rev (113 aa).

The homomultimerization stretch occupies residues 15 to 23 (LIKFLYQSN). The tract at residues 17–45 (KFLYQSNPPPSPEGTRQARRNRRRRWRQR) is disordered. Positions 31–47 (TRQARRNRRRRWRQRQR) match the Nuclear localization signal and RNA-binding (RRE) motif. Residues 33–45 (QARRNRRRRWRQR) are compositionally biased toward basic residues. The Nuclear export signal and binding to XPO1 signature appears at 70–81 (LQLPPLERLTLD). Residues Ser-89 and Ser-96 each carry the phosphoserine; by host modification. The interval 89-113 (SGTQGVGSPQILVESPTILESGTKE) is disordered.

This sequence belongs to the HIV-1 REV protein family. As to quaternary structure, homomultimer; when bound to the RRE. Multimeric assembly is essential for activity and may involve XPO1. Binds to human KPNB1, XPO1, TNPO1, RANBP5 and IPO7. Interacts with the viral Integrase. Interacts with human KHDRBS1. Interacts with human NAP1; this interaction decreases Rev multimerization and stimulates its activity. Interacts with human DEAD-box helicases DDX3 and DDX24; these interactions may serve for viral RNA export to the cytoplasm and packaging, respectively. Interacts with human PSIP1; this interaction may inhibit HIV-1 DNA integration by promoting dissociation of the Integrase-LEDGF/p75 complex. In terms of processing, asymmetrically arginine dimethylated at one site by host PRMT6. Methylation impairs the RNA-binding activity and export of viral RNA from the nucleus to the cytoplasm. Phosphorylated by protein kinase CK2. Presence of, and maybe binding to the N-terminus of the regulatory beta subunit of CK2 is necessary for CK2-mediated Rev's phosphorylation.

Its subcellular location is the host nucleus. It localises to the host nucleolus. The protein resides in the host cytoplasm. Its function is as follows. Escorts unspliced or incompletely spliced viral pre-mRNAs (late transcripts) out of the nucleus of infected cells. These pre-mRNAs carry a recognition sequence called Rev responsive element (RRE) located in the env gene, that is not present in fully spliced viral mRNAs (early transcripts). This function is essential since most viral proteins are translated from unspliced or partially spliced pre-mRNAs which cannot exit the nucleus by the pathway used by fully processed cellular mRNAs. Rev itself is translated from a fully spliced mRNA that readily exits the nucleus. Rev's nuclear localization signal (NLS) binds directly to KPNB1/Importin beta-1 without previous binding to KPNA1/Importin alpha-1. KPNB1 binds to the GDP bound form of RAN (Ran-GDP) and targets Rev to the nucleus. In the nucleus, the conversion from Ran-GDP to Ran-GTP dissociates Rev from KPNB1 and allows Rev's binding to the RRE in viral pre-mRNAs. Rev multimerization on the RRE via cooperative assembly exposes its nuclear export signal (NES) to the surface. Rev can then form a complex with XPO1/CRM1 and Ran-GTP, leading to nuclear export of the complex. Conversion from Ran-GTP to Ran-GDP mediates dissociation of the Rev/RRE/XPO1/RAN complex, so that Rev can return to the nucleus for a subsequent round of export. Beside KPNB1, also seems to interact with TNPO1/Transportin-1, RANBP5/IPO5 and IPO7/RANBP7 for nuclear import. The nucleoporin-like HRB/RIP is an essential cofactor that probably indirectly interacts with Rev to release HIV RNAs from the perinuclear region to the cytoplasm. The polypeptide is Protein Rev (Human immunodeficiency virus type 1 group M subtype B (isolate JH32) (HIV-1)).